Reading from the N-terminus, the 242-residue chain is ATP synthase subunit a (242 aa).

The next 5 membrane-spanning stretches (helical) occupy residues 21–41 (LSSI…AIIC), 79–99 (FHFL…LGLP), 116–136 (DATV…FYGV), 173–193 (LYGN…LVTG), and 198–218 (AWGW…SIFI).

This sequence belongs to the ATPase A chain family. In terms of assembly, F-type ATPases have 2 components, CF(1) - the catalytic core - and CF(0) - the membrane proton channel. CF(1) has five subunits: alpha(3), beta(3), gamma(1), delta(1), epsilon(1). CF(0) has three main subunits: a(1), b(2) and c(9-12). The alpha and beta chains form an alternating ring which encloses part of the gamma chain. CF(1) is attached to CF(0) by a central stalk formed by the gamma and epsilon chains, while a peripheral stalk is formed by the delta and b chains.

Its subcellular location is the cell membrane. In terms of biological role, key component of the proton channel; it plays a direct role in the translocation of protons across the membrane. In Staphylococcus saprophyticus subsp. saprophyticus (strain ATCC 15305 / DSM 20229 / NCIMB 8711 / NCTC 7292 / S-41), this protein is ATP synthase subunit a.